The chain runs to 230 residues: Large ribosomal subunit protein uL1 (230 aa).

This sequence belongs to the universal ribosomal protein uL1 family. Part of the 50S ribosomal subunit.

Binds directly to 23S rRNA. The L1 stalk is quite mobile in the ribosome, and is involved in E site tRNA release. In terms of biological role, protein L1 is also a translational repressor protein, it controls the translation of the L11 operon by binding to its mRNA. The chain is Large ribosomal subunit protein uL1 from Bifidobacterium longum (strain DJO10A).